The sequence spans 313 residues: Porphobilinogen deaminase (313 aa).

Cys-242 is subject to S-(dipyrrolylmethanemethyl)cysteine.

Belongs to the HMBS family. Monomer. It depends on dipyrromethane as a cofactor.

It carries out the reaction 4 porphobilinogen + H2O = hydroxymethylbilane + 4 NH4(+). The protein operates within porphyrin-containing compound metabolism; protoporphyrin-IX biosynthesis; coproporphyrinogen-III from 5-aminolevulinate: step 2/4. Tetrapolymerization of the monopyrrole PBG into the hydroxymethylbilane pre-uroporphyrinogen in several discrete steps. The sequence is that of Porphobilinogen deaminase from Pseudomonas fluorescens (strain SBW25).